Consider the following 731-residue polypeptide: DNA topoisomerase 1 (731 aa).

The Toprim domain maps to 17–130 (KHLVIVESPA…KRIVFNEITP (114 aa)). E23 and D96 together coordinate Mg(2+). In terms of domain architecture, Topo IA-type catalytic spans 144-569 (DTAKVNAQKA…DFYPAFSEKV (426 aa)). The tract at residues 178–183 (SAGRVQ) is interaction with DNA. Y312 acts as the O-(5'-phospho-DNA)-tyrosine intermediate in catalysis. 3 consecutive C4-type zinc fingers follow at residues 591–617 (CSQCGDTMVKKLGRFGFFLACGKFPEC), 628–657 (CPRPACDGNIVGKKTRGRKEFYGCTRFPVC), and 670–696 (CPQCRCFLVEKSNRRVGTYTACVNPEC).

Belongs to the type IA topoisomerase family. Monomer. Requires Mg(2+) as cofactor.

The enzyme catalyses ATP-independent breakage of single-stranded DNA, followed by passage and rejoining.. Releases the supercoiling and torsional tension of DNA, which is introduced during the DNA replication and transcription, by transiently cleaving and rejoining one strand of the DNA duplex. Introduces a single-strand break via transesterification at a target site in duplex DNA. The scissile phosphodiester is attacked by the catalytic tyrosine of the enzyme, resulting in the formation of a DNA-(5'-phosphotyrosyl)-enzyme intermediate and the expulsion of a 3'-OH DNA strand. The free DNA strand then undergoes passage around the unbroken strand, thus removing DNA supercoils. Finally, in the religation step, the DNA 3'-OH attacks the covalent intermediate to expel the active-site tyrosine and restore the DNA phosphodiester backbone. This Treponema pallidum (strain Nichols) protein is DNA topoisomerase 1.